A 422-amino-acid chain; its full sequence is 3-phosphoshikimate 1-carboxyvinyltransferase (422 aa).

3 residues coordinate 3-phosphoshikimate: K20, S21, and R25. K20 provides a ligand contact to phosphoenolpyruvate. Residues G92 and R120 each coordinate phosphoenolpyruvate. 6 residues coordinate 3-phosphoshikimate: S163, S164, Q165, S191, D304, and K331. Q165 lines the phosphoenolpyruvate pocket. D304 functions as the Proton acceptor in the catalytic mechanism. R335 and R377 together coordinate phosphoenolpyruvate.

It belongs to the EPSP synthase family. As to quaternary structure, monomer.

The protein localises to the cytoplasm. The catalysed reaction is 3-phosphoshikimate + phosphoenolpyruvate = 5-O-(1-carboxyvinyl)-3-phosphoshikimate + phosphate. The protein operates within metabolic intermediate biosynthesis; chorismate biosynthesis. Functionally, catalyzes the transfer of the enolpyruvyl moiety of phosphoenolpyruvate (PEP) to the 5-hydroxyl of shikimate-3-phosphate (S3P) to produce enolpyruvyl shikimate-3-phosphate and inorganic phosphate. The polypeptide is 3-phosphoshikimate 1-carboxyvinyltransferase (Methanocorpusculum labreanum (strain ATCC 43576 / DSM 4855 / Z)).